We begin with the raw amino-acid sequence, 414 residues long: Light-independent protochlorophyllide reductase subunit N (414 aa).

The [4Fe-4S] cluster site is built by Cys16, Cys41, and Cys98.

Belongs to the BchN/ChlN family. In terms of assembly, protochlorophyllide reductase is composed of three subunits; BchL, BchN and BchB. Forms a heterotetramer of two BchB and two BchN subunits. Requires [4Fe-4S] cluster as cofactor.

The catalysed reaction is chlorophyllide a + oxidized 2[4Fe-4S]-[ferredoxin] + 2 ADP + 2 phosphate = protochlorophyllide a + reduced 2[4Fe-4S]-[ferredoxin] + 2 ATP + 2 H2O. It participates in porphyrin-containing compound metabolism; bacteriochlorophyll biosynthesis (light-independent). Component of the dark-operative protochlorophyllide reductase (DPOR) that uses Mg-ATP and reduced ferredoxin to reduce ring D of protochlorophyllide (Pchlide) to form chlorophyllide a (Chlide). This reaction is light-independent. The NB-protein (BchN-BchB) is the catalytic component of the complex. The sequence is that of Light-independent protochlorophyllide reductase subunit N from Roseiflexus castenholzii (strain DSM 13941 / HLO8).